We begin with the raw amino-acid sequence, 103 residues long: Large ribosomal subunit protein bL21 (103 aa).

The protein belongs to the bacterial ribosomal protein bL21 family. Part of the 50S ribosomal subunit. Contacts protein L20.

In terms of biological role, this protein binds to 23S rRNA in the presence of protein L20. The sequence is that of Large ribosomal subunit protein bL21 from Clostridium beijerinckii (strain ATCC 51743 / NCIMB 8052) (Clostridium acetobutylicum).